We begin with the raw amino-acid sequence, 443 residues long: ATP-dependent protease ATPase subunit HslU (443 aa).

ATP contacts are provided by residues Ile18, 60–65 (GVGKTE), Asp256, Glu321, and Arg393.

It belongs to the ClpX chaperone family. HslU subfamily. In terms of assembly, a double ring-shaped homohexamer of HslV is capped on each side by a ring-shaped HslU homohexamer. The assembly of the HslU/HslV complex is dependent on binding of ATP.

The protein resides in the cytoplasm. In terms of biological role, ATPase subunit of a proteasome-like degradation complex; this subunit has chaperone activity. The binding of ATP and its subsequent hydrolysis by HslU are essential for unfolding of protein substrates subsequently hydrolyzed by HslV. HslU recognizes the N-terminal part of its protein substrates and unfolds these before they are guided to HslV for hydrolysis. The polypeptide is ATP-dependent protease ATPase subunit HslU (Wigglesworthia glossinidia brevipalpis).